A 526-amino-acid chain; its full sequence is tRNA (guanine(26)-N(2))-dimethyltransferase (526 aa).

Over residues 1 to 10 (MTENVNSSGD) the composition is skewed to polar residues. Positions 1-20 (MTENVNSSGDSAIKSEDKEE) are disordered. The Trm1 methyltransferase domain occupies 22 to 441 (TVIQEGQAKV…APMHLLWDIY (420 aa)). 3 residues coordinate S-adenosyl-L-methionine: R47, R104, and D122. Zn(2+) contacts are provided by C286, C289, C325, and C328. The interval 498-526 (KGKNWGPRQKAKGSVNSTKAGFQLTEHKE) is disordered.

It belongs to the class I-like SAM-binding methyltransferase superfamily. Trm1 family.

It catalyses the reaction guanosine(26) in tRNA + 2 S-adenosyl-L-methionine = N(2)-dimethylguanosine(26) in tRNA + 2 S-adenosyl-L-homocysteine + 2 H(+). In terms of biological role, dimethylates a single guanine residue at position 26 of most tRNAs using S-adenosyl-L-methionine as donor of the methyl groups. This Caenorhabditis elegans protein is tRNA (guanine(26)-N(2))-dimethyltransferase (trm-1).